Consider the following 430-residue polypeptide: Dihydroorotase (430 aa).

The Zn(2+) site is built by His-61 and His-63. Residues 63–65 (HLR) and Asn-95 each bind substrate. Asp-153, His-180, and His-233 together coordinate Zn(2+). Residue Asn-279 participates in substrate binding. Asp-306 contacts Zn(2+). The active site involves Asp-306. Substrate is bound at residue His-310.

It belongs to the metallo-dependent hydrolases superfamily. DHOase family. Class I DHOase subfamily. It depends on Zn(2+) as a cofactor.

It carries out the reaction (S)-dihydroorotate + H2O = N-carbamoyl-L-aspartate + H(+). It functions in the pathway pyrimidine metabolism; UMP biosynthesis via de novo pathway; (S)-dihydroorotate from bicarbonate: step 3/3. In terms of biological role, catalyzes the reversible cyclization of carbamoyl aspartate to dihydroorotate. This is Dihydroorotase from Caldicellulosiruptor saccharolyticus (strain ATCC 43494 / DSM 8903 / Tp8T 6331).